The sequence spans 345 residues: S-adenosylmethionine:tRNA ribosyltransferase-isomerase (345 aa).

The protein belongs to the QueA family. Monomer.

It is found in the cytoplasm. The enzyme catalyses 7-aminomethyl-7-carbaguanosine(34) in tRNA + S-adenosyl-L-methionine = epoxyqueuosine(34) in tRNA + adenine + L-methionine + 2 H(+). It participates in tRNA modification; tRNA-queuosine biosynthesis. Its function is as follows. Transfers and isomerizes the ribose moiety from AdoMet to the 7-aminomethyl group of 7-deazaguanine (preQ1-tRNA) to give epoxyqueuosine (oQ-tRNA). This is S-adenosylmethionine:tRNA ribosyltransferase-isomerase from Acidiphilium cryptum (strain JF-5).